The chain runs to 389 residues: S-adenosylmethionine synthase (389 aa).

Residue His-16 coordinates ATP. A Mg(2+)-binding site is contributed by Asp-18. Residue Glu-44 coordinates K(+). Glu-57 and Gln-100 together coordinate L-methionine. Residues Gln-100–Glu-110 form a flexible loop region. ATP is bound by residues Asp-167–Lys-169, Arg-233–Phe-234, Asp-242, Arg-248–Lys-249, Ala-265, and Lys-269. Asp-242 is a binding site for L-methionine. Lys-273 serves as a coordination point for L-methionine.

Belongs to the AdoMet synthase family. As to quaternary structure, homotetramer; dimer of dimers. Mg(2+) serves as cofactor. The cofactor is K(+).

Its subcellular location is the cytoplasm. It catalyses the reaction L-methionine + ATP + H2O = S-adenosyl-L-methionine + phosphate + diphosphate. It participates in amino-acid biosynthesis; S-adenosyl-L-methionine biosynthesis; S-adenosyl-L-methionine from L-methionine: step 1/1. Catalyzes the formation of S-adenosylmethionine (AdoMet) from methionine and ATP. The overall synthetic reaction is composed of two sequential steps, AdoMet formation and the subsequent tripolyphosphate hydrolysis which occurs prior to release of AdoMet from the enzyme. The polypeptide is S-adenosylmethionine synthase (Acidithiobacillus ferrooxidans (strain ATCC 23270 / DSM 14882 / CIP 104768 / NCIMB 8455) (Ferrobacillus ferrooxidans (strain ATCC 23270))).